We begin with the raw amino-acid sequence, 242 residues long: Dihydropteridine reductase (242 aa).

12 to 36 (LVYGGRGALGSRCVQAFRARNWWVA) provides a ligand contact to NADP(+). 4 positions are modified to N6-succinyllysine: K71, K77, K94, and K100. Y148 acts as the Proton acceptor in catalysis.

It belongs to the short-chain dehydrogenases/reductases (SDR) family. In terms of assembly, homodimer.

The enzyme catalyses 5,6,7,8-tetrahydropteridine + NAD(+) = 6,7-dihydropteridine + NADH + H(+). The catalysed reaction is 5,6,7,8-tetrahydropteridine + NADP(+) = 6,7-dihydropteridine + NADPH + H(+). Catalyzes the conversion of quinonoid dihydrobiopterin into tetrahydrobiopterin. The chain is Dihydropteridine reductase (QDPR) from Bos taurus (Bovine).